A 199-amino-acid polypeptide reads, in one-letter code: MTTLTAQQIACVYAWLAQLFSRELDDEQLTQIASAQMAEWFSLLKSEPPLTAAVNELENCVATLTVRDDARLELAADFCGLFLMTDKQAALPYASAYKQDEQEIKRLLVEAGMETSGNFNEPADHLAIYLELLSHLHFSLGEGTVPARRIDSLRQKTLTALWQWLPEFVARCHQYDSFGFYAALSQLLLVLVEGDHQNR.

The protein belongs to the TorD/DmsD family. TorD subfamily.

The protein localises to the cytoplasm. In terms of biological role, involved in the biogenesis of TorA. Acts on TorA before the insertion of the molybdenum cofactor and, as a result, probably favors a conformation of the apoenzyme that is competent for acquiring the cofactor. The polypeptide is Chaperone protein TorD (Shigella dysenteriae serotype 1 (strain Sd197)).